We begin with the raw amino-acid sequence, 857 residues long: MIRQVNKKAISNSLFKRLSLSGSAFANITANKKSSTHQLNQKTQLANVRFYSTKSTVIQLLNNIGSKREVEQYLKYFTSVSQQQFAVIKVGGAIITQQLNELASCLAFLYHVGLYPIVLHGTGPQINELLENEGVEPEYIDGIRITNPKTMEVVRKCFLEQNLRLVTALEKIGVHARPITAGVFEAEYLDKDKYQLVGKITSVNKSPVEAAINSGYLPILTSLAETSSGQLLNVNADVAAGELAREFEPLKIVYLNEKGGIINGNTGEKVSAINLDEEYEDLLKESWVKYGTKLKIKEIHDLLQHLPRSSSVAIIDVNDLQKELFTDSGAGTLIRRGYRLINRNSLRDFGNPDLLRNALLRDPEIKTGKVSVASYLKFLDSVQFKSYGDEPLEVLAIVVEQNDKIPKLDEFLSSKTGWLNNVTDNIFNAIKKDYSQLCWVVNENDANLPWYFSKSDGSFAKNGQILFWYGLNIDEASKLIKEFDSSSIGSSLSSSKESGVFTSAQQKRGFHHSTVRRNTNPNPPLSEGKQTERKKVALIGARGYTGQNLIKLIDNHPYLDISYVSSRELEGQKLQGYNKDNIVYSNLQIEDIKRLEENNEVDVWVMALPNGVCKPFVDTIDLVQNPNSKIVDLSADYRFDTTGEWTYGLPELNDRKTIAQAKKISNPGCYATAAQVAIAPLKEYISGTPSIFGVSGYSGAGTKPSPKNDVNLLSNNLIPYSLTDHVHEKEISSQLGLQVAFTPHVAQWFQGITHTINIPIKKGSLTSREIRNIYQDRYQGEKLITISGEAPLVKDISGKHGVVVGGFAVNSNEDRVVIVATIDNLLKGAATQCLQNINLSQEFGEYDGIPTESLIRG.

Positions 341-492 (INRNSLRDFG…FDSSSIGSSL (152 aa)) constitute an N-acetyltransferase domain. Residues 509 to 532 (GFHHSTVRRNTNPNPPLSEGKQTE) form a disordered region. Cysteine 669 is a catalytic residue.

The protein in the N-terminal section; belongs to the acetylglutamate kinase family. This sequence in the C-terminal section; belongs to the NAGSA dehydrogenase family.

The protein localises to the mitochondrion. The enzyme catalyses N-acetyl-L-glutamate 5-semialdehyde + phosphate + NADP(+) = N-acetyl-L-glutamyl 5-phosphate + NADPH + H(+). The catalysed reaction is N-acetyl-L-glutamate + ATP = N-acetyl-L-glutamyl 5-phosphate + ADP. The protein operates within amino-acid biosynthesis; L-arginine biosynthesis; N(2)-acetyl-L-ornithine from L-glutamate: step 2/4. It functions in the pathway amino-acid biosynthesis; L-arginine biosynthesis; N(2)-acetyl-L-ornithine from L-glutamate: step 3/4. This is Protein ARG5,6, mitochondrial (ARG5,6) from Candida albicans (Yeast).